Here is a 402-residue protein sequence, read N- to C-terminus: Argininosuccinate synthase (402 aa).

ATP contacts are provided by residues 11–19 (AYSGGLDTS) and alanine 39. L-citrulline-binding residues include tyrosine 90 and serine 95. Glycine 120 contributes to the ATP binding site. Threonine 122, asparagine 126, and aspartate 127 together coordinate L-aspartate. Residue asparagine 126 coordinates L-citrulline. L-citrulline contacts are provided by arginine 130, serine 179, serine 188, glutamate 264, and tyrosine 276.

The protein belongs to the argininosuccinate synthase family. Type 1 subfamily. In terms of assembly, homotetramer.

It localises to the cytoplasm. It carries out the reaction L-citrulline + L-aspartate + ATP = 2-(N(omega)-L-arginino)succinate + AMP + diphosphate + H(+). It functions in the pathway amino-acid biosynthesis; L-arginine biosynthesis; L-arginine from L-ornithine and carbamoyl phosphate: step 2/3. In Roseiflexus castenholzii (strain DSM 13941 / HLO8), this protein is Argininosuccinate synthase.